Reading from the N-terminus, the 388-residue chain is Succinate--CoA ligase [ADP-forming] subunit beta (388 aa).

Positions 9 to 244 (KSLFAEYGLP…PSQDDAREAH (236 aa)) constitute an ATP-grasp domain. ATP contacts are provided by residues lysine 46, 53 to 55 (GRG), glutamate 99, threonine 102, and glutamate 107. Mg(2+) contacts are provided by asparagine 199 and aspartate 213. Residues asparagine 264 and 321–323 (GIV) contribute to the substrate site.

The protein belongs to the succinate/malate CoA ligase beta subunit family. Heterotetramer of two alpha and two beta subunits. Requires Mg(2+) as cofactor.

The enzyme catalyses succinate + ATP + CoA = succinyl-CoA + ADP + phosphate. The catalysed reaction is GTP + succinate + CoA = succinyl-CoA + GDP + phosphate. Its pathway is carbohydrate metabolism; tricarboxylic acid cycle; succinate from succinyl-CoA (ligase route): step 1/1. Its function is as follows. Succinyl-CoA synthetase functions in the citric acid cycle (TCA), coupling the hydrolysis of succinyl-CoA to the synthesis of either ATP or GTP and thus represents the only step of substrate-level phosphorylation in the TCA. The beta subunit provides nucleotide specificity of the enzyme and binds the substrate succinate, while the binding sites for coenzyme A and phosphate are found in the alpha subunit. The chain is Succinate--CoA ligase [ADP-forming] subunit beta from Shewanella putrefaciens (strain CN-32 / ATCC BAA-453).